A 444-amino-acid chain; its full sequence is Ribosomal protein uS12 methylthiotransferase RimO (444 aa).

The region spanning 6-116 (PNIGFVSLGC…VMEHVHKYVP (111 aa)) is the MTTase N-terminal domain. Cys-15, Cys-51, Cys-80, Cys-148, Cys-152, and Cys-155 together coordinate [4Fe-4S] cluster. Residues 134-375 (LTPKHYAYLK…MQLQQEISAA (242 aa)) form the Radical SAM core domain. In terms of domain architecture, TRAM spans 378-444 (QQKIGKTWKV…ADEYDLWGTC (67 aa)).

This sequence belongs to the methylthiotransferase family. RimO subfamily. Requires [4Fe-4S] cluster as cofactor.

The protein localises to the cytoplasm. The catalysed reaction is L-aspartate(89)-[ribosomal protein uS12]-hydrogen + (sulfur carrier)-SH + AH2 + 2 S-adenosyl-L-methionine = 3-methylsulfanyl-L-aspartate(89)-[ribosomal protein uS12]-hydrogen + (sulfur carrier)-H + 5'-deoxyadenosine + L-methionine + A + S-adenosyl-L-homocysteine + 2 H(+). Its function is as follows. Catalyzes the methylthiolation of an aspartic acid residue of ribosomal protein uS12. This chain is Ribosomal protein uS12 methylthiotransferase RimO, found in Actinobacillus succinogenes (strain ATCC 55618 / DSM 22257 / CCUG 43843 / 130Z).